A 146-amino-acid polypeptide reads, in one-letter code: 3-hydroxyacyl-[acyl-carrier-protein] dehydratase FabZ (146 aa).

Residue histidine 49 is part of the active site.

It belongs to the thioester dehydratase family. FabZ subfamily.

The protein localises to the cytoplasm. It carries out the reaction a (3R)-hydroxyacyl-[ACP] = a (2E)-enoyl-[ACP] + H2O. Functionally, involved in unsaturated fatty acids biosynthesis. Catalyzes the dehydration of short chain beta-hydroxyacyl-ACPs and long chain saturated and unsaturated beta-hydroxyacyl-ACPs. The protein is 3-hydroxyacyl-[acyl-carrier-protein] dehydratase FabZ of Psychrobacter arcticus (strain DSM 17307 / VKM B-2377 / 273-4).